The following is a 344-amino-acid chain: uncharacterized protein (344 aa).

5 consecutive transmembrane segments (helical) span residues 53 to 73 (FVVG…VSVW), 84 to 104 (WPIL…GYNI), 153 to 173 (IYPL…LYLL), 189 to 209 (FGAW…LEML), and 275 to 295 (IASE…VGVF).

This sequence belongs to the steroid 5-alpha reductase family.

The protein resides in the endoplasmic reticulum membrane. This is an uncharacterized protein from Schizosaccharomyces pombe (strain 972 / ATCC 24843) (Fission yeast).